We begin with the raw amino-acid sequence, 876 residues long: uncharacterized protein (876 aa).

The segment covering 37-48 (DEDKSNNDDRRS) has biased composition (basic and acidic residues). Disordered stretches follow at residues 37–67 (DEDK…KGSN), 112–155 (DESG…RNIK), 226–254 (KKKS…TKSQ), and 330–353 (MMMD…SRSI). 2 positions are modified to phosphoserine: Ser-48 and Ser-51. Low complexity predominate over residues 49-58 (LASILDSSSS). Residues 115 to 131 (GFTSDNNADYFSGNSYS) show a composition bias toward polar residues. A phosphoserine mark is found at Ser-360, Ser-510, Ser-552, and Ser-577. Positions 490–513 (PEVTKQKNTSGPKPGFSHSKSADA) are disordered. 2 disordered regions span residues 661–728 (ITGG…RSPQ) and 750–876 (RHSL…FGRL). The span at 689 to 699 (SKSKSRSSSKS) shows a compositional bias: basic residues. A compositionally biased stretch (low complexity) spans 717–726 (SSASASRSRS). Ser-775 carries the phosphoserine modification. Composition is skewed to low complexity over residues 794 to 808 (NKDS…SSSL) and 842 to 854 (FSFF…SPSS).

This is an uncharacterized protein from Saccharomyces cerevisiae (strain ATCC 204508 / S288c) (Baker's yeast).